The sequence spans 632 residues: Asparagine synthetase [glutamine-hydrolyzing] 1 (632 aa).

Cys-2 functions as the For GATase activity in the catalytic mechanism. The Glutamine amidotransferase type-2 domain maps to 2–214 (CGFVGVFNKH…PGSQFTIRPD (213 aa)). Residues 52-56 (RLSII), 77-79 (NGE), and Asp-102 each bind L-glutamine. ATP contacts are provided by residues Val-288 and 361–362 (SG).

The protein belongs to the asparagine synthetase family.

The catalysed reaction is L-aspartate + L-glutamine + ATP + H2O = L-asparagine + L-glutamate + AMP + diphosphate + H(+). It participates in amino-acid biosynthesis; L-asparagine biosynthesis; L-asparagine from L-aspartate (L-Gln route): step 1/1. In terms of biological role, main asparagine synthetase in vegetative cells. This Bacillus subtilis (strain 168) protein is Asparagine synthetase [glutamine-hydrolyzing] 1 (asnB).